The sequence spans 27 residues: L-amino-acid oxidase (27 aa).

As to quaternary structure, homodimer; non-covalently linked. It depends on FAD as a cofactor. In terms of processing, contains 2 disulfide bonds. Post-translationally, N-glycosylated. As to expression, expressed by the venom gland.

The protein resides in the secreted. It catalyses the reaction an L-alpha-amino acid + O2 + H2O = a 2-oxocarboxylate + H2O2 + NH4(+). It carries out the reaction L-leucine + O2 + H2O = 4-methyl-2-oxopentanoate + H2O2 + NH4(+). In terms of biological role, catalyzes an oxidative deamination of predominantly hydrophobic and aromatic L-amino acids, thus producing hydrogen peroxide that may contribute to the diverse toxic effects of this enzyme. Shows activity on L-Leu. Exhibits diverse biological activities, such as hemolysis, edema, apoptosis, as well as induction of platelet aggregation. Effects of snake L-amino oxidases on platelets are controversial, since they either induce aggregation or inhibit agonist-induced aggregation. These different effects are probably due to different experimental conditions. Unlike other snake venom L-amino acid oxidases, does not induce hemorrhage. This protein may also have antibacterial and antiparasitic activities. In Eristicophis macmahoni (Leaf-nosed viper), this protein is L-amino-acid oxidase.